Reading from the N-terminus, the 329-residue chain is Coiled-coil domain-containing protein 54 (329 aa).

Positions 86 to 149 (NIVSSISNIQ…VTELESQNSY (64 aa)) form a coiled coil. The span at 178–191 (TPKGTATSPDTVIS) shows a compositional bias: polar residues. The interval 178–214 (TPKGTATSPDTVISSAEPERVSSYPEPTGELKKKTTS) is disordered. Thr182 is subject to Phosphothreonine.

This chain is Coiled-coil domain-containing protein 54 (Ccdc54), found in Mus musculus (Mouse).